The sequence spans 605 residues: MLWIWVPGILGLFGRVEALWPQPSEYSHGNKTLWLSPSVRFTYTNNQRSFIYTRPSYAGINWIPGGWLNLLQNPWGSAEQTVAEPLPNVEQFVEDAIKRTKHAIINSKFVPWKFHPRHQKFEPLVDGQHPTIEEVIINEASKTSQEWSPRNYVNGDEKYEIRISEDGEVQISSRSPIGTIRALQTFQQLFYSHSHSKSYTPFAPISISDSPKWRHRGLNLDISRNVIRPEDVKRTIDAMASVKLNRLHAHAADSQSWPLDIPSIPELAAKASYHPSQVWSSSELEAVQLYGLERGVSVFLEIDLPGHTAAVGHAFPDLVAAYHMDQWEKYAAEPPSGQIKLNSSAVYQFLDLLMADLIPRVSPLTEYFHTGGDEFNLNTYLLEINLGSNDRRVLTPFLDRMITHVHSSLRSSGVTPIVWEELVLDWDLNLPSHKTAGETGGVIVQAWRNSSAVKHVLQKGYQTIFGTGDAWYLDCGVGTFLNPRPGSKAVQNPYLDWCAPTKNWKHMYVYNPLKDIPVELQSLLVGGETHMWSELVDPVNMDQMIWPRAAAAAEVLWTGPRSPDNIQDASYRLAKWRERVVNDAGIRAAMVQMTYCLMRESGCEL.

A signal peptide spans 1–18 (MLWIWVPGILGLFGRVEA). A glycan (N-linked (GlcNAc...) asparagine) is linked at asparagine 30. Glutamate 293 serves as the catalytic Nucleophile. N-linked (GlcNAc...) asparagine glycosylation is present at asparagine 342. Glutamate 374 (proton donor) is an active-site residue. A glycan (N-linked (GlcNAc...) asparagine) is linked at asparagine 449.

The protein belongs to the glycosyl hydrolase 20 family.

It is found in the secreted. It carries out the reaction Hydrolysis of terminal non-reducing N-acetyl-D-hexosamine residues in N-acetyl-beta-D-hexosaminides.. Its function is as follows. Beta-hexosaminidase that shows a broad substrate specificity. The sequence is that of Beta-hexosaminidase ARB_07893 from Arthroderma benhamiae (strain ATCC MYA-4681 / CBS 112371) (Trichophyton mentagrophytes).